A 498-amino-acid chain; its full sequence is ATP synthase subunit beta, chloroplastic (498 aa).

172–179 serves as a coordination point for ATP; sequence GGAGVGKT.

Belongs to the ATPase alpha/beta chains family. F-type ATPases have 2 components, CF(1) - the catalytic core - and CF(0) - the membrane proton channel. CF(1) has five subunits: alpha(3), beta(3), gamma(1), delta(1), epsilon(1). CF(0) has four main subunits: a(1), b(1), b'(1) and c(9-12).

It is found in the plastid. The protein resides in the chloroplast thylakoid membrane. The catalysed reaction is ATP + H2O + 4 H(+)(in) = ADP + phosphate + 5 H(+)(out). Its function is as follows. Produces ATP from ADP in the presence of a proton gradient across the membrane. The catalytic sites are hosted primarily by the beta subunits. The sequence is that of ATP synthase subunit beta, chloroplastic from Drimys granadensis.